We begin with the raw amino-acid sequence, 406 residues long: Probable endo-xylogalacturonan hydrolase A (406 aa).

The first 18 residues, 1 to 18 (MTLYRNLLLLASLGLSYA), serve as a signal peptide directing secretion. N-linked (GlcNAc...) asparagine glycosylation occurs at N84. 2 PbH1 repeats span residues 183-213 (ATNV…DIGE) and 214-235 (STYV…ALKP). Residue D228 is the Proton donor of the active site. The active site involves H251. PbH1 repeat units follow at residues 266–289 (VKNI…KTYP), 299–320 (VSNV…QIQS), and 333–375 (PGNA…SISG). N-linked (GlcNAc...) asparagine glycans are attached at residues N278 and N301.

The protein belongs to the glycosyl hydrolase 28 family.

The protein resides in the secreted. Its function is as follows. Pectinolytic enzyme involved in the degradation of xylogalacturonan (xga), a galacturonan backbone heavily substituted with xylose, and which is one important component of the hairy regions of pectin. Activity requires a galacturonic acid backbone substituted with xylose. This chain is Probable endo-xylogalacturonan hydrolase A (xghA), found in Aspergillus niger (strain ATCC MYA-4892 / CBS 513.88 / FGSC A1513).